The sequence spans 384 residues: Probable endopolygalacturonase C (384 aa).

A signal peptide spans 1–19 (MVRQLALACGLLAAVAVQA). Residues 20-40 (APAEPAHPMVTEAPDASLLHK) constitute a propeptide that is removed on maturation. An intrachain disulfide couples Cys45 to Cys63. 2 PbH1 repeats span residues 176 to 207 (ATDLTLTDITIDNTDGDTDDLAANTDGFDIGE) and 208 to 229 (STDITITGAKVYNQDDCVAINS). Asp222 (proton donor) is an active-site residue. A disulfide bridge links Cys224 with Cys240. His244 is a catalytic residue. PbH1 repeat units lie at residues 254–280 (RDDNTVKNVTFYDVNVLKSQQAIRIKA) and 288–310 (ISDITYHEIAFSDATDYGIVIEQ). Asn261 carries N-linked (GlcNAc...) asparagine glycosylation. Intrachain disulfides connect Cys349–Cys354 and Cys373–Cys382.

The protein belongs to the glycosyl hydrolase 28 family.

It is found in the secreted. The catalysed reaction is (1,4-alpha-D-galacturonosyl)n+m + H2O = (1,4-alpha-D-galacturonosyl)n + (1,4-alpha-D-galacturonosyl)m.. In terms of biological role, involved in maceration and soft-rotting of plant tissue. Hydrolyzes the 1,4-alpha glycosidic bonds of de-esterified pectate in the smooth region of the plant cell wall. In Aspergillus aculeatus, this protein is Probable endopolygalacturonase C (pgaC).